Here is a 585-residue protein sequence, read N- to C-terminus: MKWIKKGTFSGKQYRDDVSRKISWGHWFAFFNIIVAIFIGARYAFIIDWPDTLAGKLYFFVSLLGHFSFNVFALYLLVVFPLSFIVKNHRTFRGLTVIFSTICTTLLLFDTAVFNRFNLHLSSVVWNLLVNPENGEMSRDWQIFFAPMPIILLAQMLFSRWSWEKLRSLERQKWLKGTGIFLTTTFIATHLIYAWADAYLYRPITMQRSNFPLSYPMTARSFLEKHGFLDGEEYTQKLAQEGRLDALKIDYPKKELTYAPITHKPNILLVTVSGLRHDAISNEKMPKLAKFATSSTEFTNHYSTGNSNNAGLIGLFYGLNANYTDSILSNHTQSVLIEKLRAENYQLGLFSATNFKDSIFRQALFREIKLSSNKTNKPNNESAVKNLNDFIKAQKTDSPWFAYLDLALEAKNPSDYDRTLQDIDSLLAKALESTPLENTLVIITSEHGLTFNEMNQKERENYFGRDEIQVPLLVYWKDLPVGKQNGLSNHADIFSALMQTVFRVENPLMDYSQGRNLFDLKGDDWVLASNFRWNVVIQPDGTQYHIDRKGNYKKFDKDYIEQSSDRPPLGIFLEAFQLQNFFFEK.

This sequence to E.coli YejM.

This is an uncharacterized protein from Haemophilus influenzae (strain ATCC 51907 / DSM 11121 / KW20 / Rd).